Here is a 330-residue protein sequence, read N- to C-terminus: Erlin-2-B (330 aa).

Residues 1–2 (MS) are Cytoplasmic-facing. Residues 3 to 23 (HAGAIAALGVALIAAALFSAI) form a helical membrane-spanning segment. The Lumenal segment spans residues 24 to 330 (HKIEEGHVGV…NEPAAAEELK (307 aa)). Residue asparagine 106 is glycosylated (N-linked (GlcNAc...) asparagine). The tract at residues 308–330 (SSSAGPRVQSAKRNEPAAAEELK) is disordered. Positions 319–330 (KRNEPAAAEELK) are enriched in basic and acidic residues.

This sequence belongs to the band 7/mec-2 family.

The protein resides in the endoplasmic reticulum membrane. In terms of biological role, mediates the endoplasmic reticulum-associated degradation (ERAD) of inositol 1,4,5-trisphosphate receptors (IP3Rs). Promotes sterol-accelerated ERAD of HMGCR. Involved in regulation of cellular cholesterol homeostasis by regulation the SREBP signaling pathway. The chain is Erlin-2-B (erlin2-b) from Xenopus laevis (African clawed frog).